A 145-amino-acid polypeptide reads, in one-letter code: MTKIIIEVEVRPSEDENKVLQAIRNLFDFENLKEEKSGYTKILVAESHTLLSLQKFHRKLREERILDAARKYLTKNLIGNVITFMLNKQAAAVGKISFVDDEKESPLGPIKVTIEYKDPQALIDWLTPKTAKGVPLWENPIPSDE.

It belongs to the UPF0201 family.

The polypeptide is UPF0201 protein STK_09490 (Sulfurisphaera tokodaii (strain DSM 16993 / JCM 10545 / NBRC 100140 / 7) (Sulfolobus tokodaii)).